Consider the following 339-residue polypeptide: GTPase Obg (339 aa).

The Obg domain maps to 1–159 (MKFVDEAFVR…RELKLELKLL (159 aa)). The interval 127 to 147 (NTHFKSSTNRAPRRTTSGEEG) is disordered. An OBG-type G domain is found at 160 to 333 (ADVGLLGLPN…LCYDLMSFLE (174 aa)). GTP-binding positions include 166–173 (GLPNAGKS), 191–195 (FTTLY), 213–216 (DIPG), 283–286 (NKID), and 314–316 (SAI). Mg(2+)-binding residues include serine 173 and threonine 193.

The protein belongs to the TRAFAC class OBG-HflX-like GTPase superfamily. OBG GTPase family. As to quaternary structure, monomer. The cofactor is Mg(2+).

It is found in the cytoplasm. Functionally, an essential GTPase which binds GTP, GDP and possibly (p)ppGpp with moderate affinity, with high nucleotide exchange rates and a fairly low GTP hydrolysis rate. Plays a role in control of the cell cycle, stress response, ribosome biogenesis and in those bacteria that undergo differentiation, in morphogenesis control. The chain is GTPase Obg from Coxiella burnetii (strain CbuK_Q154) (Coxiella burnetii (strain Q154)).